The primary structure comprises 173 residues: Cytidylate kinase (173 aa).

7–15 (GLAGTGTST) is a binding site for ATP.

This sequence belongs to the cytidylate kinase family. Type 2 subfamily.

It is found in the cytoplasm. The enzyme catalyses CMP + ATP = CDP + ADP. It catalyses the reaction dCMP + ATP = dCDP + ADP. This Methanosphaera stadtmanae (strain ATCC 43021 / DSM 3091 / JCM 11832 / MCB-3) protein is Cytidylate kinase.